The following is a 367-amino-acid chain: Pepsin A (367 aa).

Positions 1–42 (SIHRVPLKKGKSLRKQLKDHGLLEDFLKKHPYNPASKYHPVL) are cleaved as a propeptide — activation peptide. One can recognise a Peptidase A1 domain in the interval 59 to 364 (YYGTISIGTP…DRANNKVGLS (306 aa)). The active site involves Asp77. Cys90 and Cys95 are disulfide-bonded. N-linked (GlcNAc...) asparagine glycosylation occurs at Asn113. Cysteines 251 and 255 form a disulfide. The active site involves Asp260. Cysteines 290 and 323 form a disulfide.

It belongs to the peptidase A1 family.

It catalyses the reaction Preferential cleavage: hydrophobic, preferably aromatic, residues in P1 and P1' positions. Cleaves 1-Phe-|-Val-2, 4-Gln-|-His-5, 13-Glu-|-Ala-14, 14-Ala-|-Leu-15, 15-Leu-|-Tyr-16, 16-Tyr-|-Leu-17, 23-Gly-|-Phe-24, 24-Phe-|-Phe-25 and 25-Phe-|-Tyr-26 bonds in the B chain of insulin.. In terms of biological role, shows particularly broad specificity; although bonds involving phenylalanine and leucine are preferred, many others are also cleaved to some extent. This chain is Pepsin A (PGA), found in Gallus gallus (Chicken).